We begin with the raw amino-acid sequence, 179 residues long: MARLKEIYWKEIAPKLKEELKLSNVMEVPRVTKITLNMGLGEAVGDKKVIEHAVADLEKITGQKVVVTYARKSIAGFKVREGWPIGVKVTLRRERMYEFLDRLLSISLPRVRDFRGLNAKSFDGRGNYSMGVKEQIIFPEIDYDKIDALRGLDITLTTTAKNDDEGRALLRAFKFPFRN.

This sequence belongs to the universal ribosomal protein uL5 family. Part of the 50S ribosomal subunit; part of the 5S rRNA/L5/L18/L25 subcomplex. Contacts the 5S rRNA and the P site tRNA. Forms a bridge to the 30S subunit in the 70S ribosome.

Functionally, this is one of the proteins that bind and probably mediate the attachment of the 5S RNA into the large ribosomal subunit, where it forms part of the central protuberance. In the 70S ribosome it contacts protein S13 of the 30S subunit (bridge B1b), connecting the 2 subunits; this bridge is implicated in subunit movement. Contacts the P site tRNA; the 5S rRNA and some of its associated proteins might help stabilize positioning of ribosome-bound tRNAs. In Pseudomonas fluorescens (strain SBW25), this protein is Large ribosomal subunit protein uL5.